We begin with the raw amino-acid sequence, 2547 residues long: Piezo-type mechanosensitive ion channel component 1 (2547 aa).

At 1–12 the chain is on the cytoplasmic side; sequence MEPHVLGAGLYW. A helical transmembrane segment spans residues 13–25; the sequence is LLLPCTLLAASLL. Residues 26–28 lie on the Extracellular side of the membrane; sequence RFN. A helical transmembrane segment spans residues 29 to 44; it reads ALSLVYLLFLLLLPWL. Topologically, residues 45–58 are cytoplasmic; sequence PGPSRHSIPGHTGR. Residues 59-81 form a helical membrane-spanning segment; the sequence is LLRALLCLSLLFLVAHLAFQICL. Residues 82-121 lie on the Extracellular side of the membrane; sequence HTVPHLDQFLGQNGSLWVKVSQHIGVTRLDLKDIFNTTRL. An N-linked (GlcNAc...) asparagine glycan is attached at Asn-94. The helical transmembrane segment at 122–138 threads the bilayer; that stretch reads VAPDLGVLLASSLCLGL. Residues 139 to 201 are Cytoplasmic-facing; sequence CGRLTRKAGQ…ASRFRVTAHW (63 aa). The chain crosses the membrane as a helical span at residues 202 to 221; sequence LLMTSGRTLVIVLLALAGIA. The Extracellular portion of the chain corresponds to 222 to 223; sequence HP. Residues 224–243 traverse the membrane as a helical segment; that stretch reads SAFSSIYLVVFLAICTWWSC. Residues 244–254 lie on the Cytoplasmic side of the membrane; that stretch reads HFPLSPLGFNT. Residues 255–275 form a helical membrane-spanning segment; it reads LCVMVSCFGAGHLICLYCYQT. Residues 276 to 316 are Extracellular-facing; sequence PFIQDMLPPGNIWARLFGLKNFVDLPNYSSPNALVLNTKHA. A helical membrane pass occupies residues 317 to 337; the sequence is WPIYVSPGILLLLYYTATSLL. Residues 338-424 lie on the Cytoplasmic side of the membrane; sequence KLHKSCPSEL…EMSPLHGLGH (87 aa). Positions 347-387 are disordered; sequence LRKETPREDEEHELELDHLEPEPQARDATQGEMPMTTEPDL. Basic and acidic residues predominate over residues 361-371; it reads ELDHLEPEPQA. The chain crosses the membrane as a helical span at residues 425–445; sequence LIMDQSYVCALIAMMVWSIMY. The Extracellular segment spans residues 446-447; sequence HS. Residues 448 to 463 traverse the membrane as a helical segment; that stretch reads WLTFVLLLWACLIWTV. Over 464–468 the chain is Cytoplasmic; that stretch reads RSRHQ. A helical transmembrane segment spans residues 469–491; that stretch reads LAMLCSPCILLYGLTLCCLRYVW. At 492–518 the chain is on the extracellular side; sequence AMELPELPTTLGPVSLHQLGLEHTRYP. A helical membrane pass occupies residues 519–536; sequence CLDLGAMLLYLLTFWLLL. The Cytoplasmic portion of the chain corresponds to 537–580; it reads RQFVKEKLLKKQKVPAALLEVTVADTEPTQTQTLLRSLGELVTG. Residues 581–601 form a helical membrane-spanning segment; it reads IYVKYWIYVCAGMFIVVSFAG. Position 602 (Arg-602) is a topological domain, extracellular. The chain crosses the membrane as a helical span at residues 603–623; it reads LVVYKIVYMFLFLLCLTLFQV. Over 624 to 633 the chain is Cytoplasmic; the sequence is YYTLWRKLLR. The chain crosses the membrane as a helical span at residues 634–655; sequence VFWWLVVAYTMLVLIAVYTFQF. Residues 656-685 are Extracellular-facing; the sequence is QDFPTYWRNLTGFTDEQLGDLGLEQFSVSE. A helical membrane pass occupies residues 686 to 702; sequence LFSSILIPGFFLLACIL. Residues 703-811 lie on the Cytoplasmic side of the membrane; the sequence is QLHYFHRPFM…RRLLELHVFK (109 aa). Ser-758 is modified (phosphoserine). A helical membrane pass occupies residues 812–823; it reads LVALYTVWVALK. Residues 824-826 lie on the Extracellular side of the membrane; it reads EVS. Residues 827 to 840 traverse the membrane as a helical segment; it reads VMNLLLVVLWAFAL. The Cytoplasmic portion of the chain corresponds to 841-854; the sequence is PYPRFRPMASCLST. A helical membrane pass occupies residues 855–869; that stretch reads VWTCIIIVCKMLYQL. At 870-921 the chain is on the extracellular side; it reads KIVNPHEYSSNCTEPFPNNTNLQPLEINQSLLYRGPVDPANWFGVRKGYPNL. A helical transmembrane segment spans residues 922–949; it reads GYIQNHLQILLLLVFEAVVYRRQEHYRR. Topologically, residues 950 to 989 are cytoplasmic; sequence QHQQAPLPAQAVCADGTRQRLDQDLLSCLKYFINFFFYKF. The helical transmembrane segment at 990 to 1005 threads the bilayer; the sequence is GLEICFLMAVNVIGQR. Residues 1006 to 1007 lie on the Extracellular side of the membrane; that stretch reads MN. A helical transmembrane segment spans residues 1008–1023; the sequence is FMVILHGCWLVAILTR. The Cytoplasmic portion of the chain corresponds to 1024–1036; it reads RRREAIARLWPNY. The chain crosses the membrane as a helical span at residues 1037–1052; that stretch reads CLFLTLFLLYQYLLCL. Topologically, residues 1053-1091 are extracellular; the sequence is GMPPALCIDYPWRWSKAIPMNSALIKWLYLPDFFRAPNS. The chain crosses the membrane as a helical span at residues 1092–1113; that stretch reads TNLISDFLLLLCASQQWQVFSA. Residues 1114–1148 lie on the Cytoplasmic side of the membrane; sequence ERTEEWQRMAGINTDHLEPLRGEPNPIPNFIHCRS. Residues 1149 to 1175 form a helical membrane-spanning segment; it reads YLDMLKVAVFRYLFWLVLVVVFVAGAT. Over 1176 to 1180 the chain is Extracellular; sequence RISIF. The helical transmembrane segment at 1181–1199 threads the bilayer; it reads GLGYLLACFYLLLFGTTLL. Residues 1200–1212 lie on the Cytoplasmic side of the membrane; it reads QKDTRAQLVLWDC. The helical transmembrane segment at 1213–1231 threads the bilayer; it reads LILYNVTVIISKNMLSLLS. Residues 1232-1280 lie on the Extracellular side of the membrane; that stretch reads CVFVEQMQSNFCWVIQLFSLVCTVKGYYDPKEMMTRDRDCLLPVEEAGI. The chain crosses the membrane as a helical span at residues 1281–1297; it reads IWDSICFFFLLLQRRIF. The Cytoplasmic segment spans residues 1298–1656; sequence LSHYFLHVSA…ELLLDRRLHI (359 aa). A coiled-coil region spans residues 1334-1365; that stretch reads HRQIEEKSLAQLKRQMKRIRAKQEKYRQSQAS. Disordered regions lie at residues 1354 to 1396, 1456 to 1480, and 1567 to 1610; these read AKQE…RRQW, RRER…DVEP, and TLSG…NTRS. Over residues 1361-1372 the composition is skewed to polar residues; that stretch reads QSQASRGQLQSK. Low complexity predominate over residues 1376–1392; sequence DPSQEPGPDSPGGSSPP. Ser-1385 and Ser-1390 each carry phosphoserine. The span at 1592–1610 shows a compositional bias: polar residues; it reads SSMTDDTSSPLSTGYNTRS. 3 positions are modified to phosphoserine: Ser-1627, Ser-1631, and Ser-1646. A helical membrane pass occupies residues 1657 to 1700; it reads PELEEAERFEAQQGRTLRLLRAGYQCVAAHSELLCYFIIILNHM. Residues 1701–1704 lie on the Extracellular side of the membrane; that stretch reads VTAS. Residues 1705 to 1720 form a helical membrane-spanning segment; it reads AASLVLPVLVFLWAML. Residues 1721-1728 lie on the Cytoplasmic side of the membrane; it reads TIPRPSKR. The chain crosses the membrane as a helical span at residues 1729 to 1747; sequence FWMTAIVFTEVMVVTKYLF. Residues 1748 to 1779 are Extracellular-facing; it reads QFGFFPWNSYVVLRRYENKPYFPPRILGLEKT. A helical transmembrane segment spans residues 1780-1801; that stretch reads DSYIKYDLVQLMALFFHRSQLL. Residues 1802 to 1976 lie on the Cytoplasmic side of the membrane; sequence CYGLWDHEED…HTKYRAATDV (175 aa). Composition is skewed to basic and acidic residues over residues 1816–1837 and 1855–1880; these read DHCR…KLES and PRDH…DLKP. The interval 1816-1931 is disordered; it reads DHCRSSVKDR…RPRHTQEKSK (116 aa). The span at 1881–1894 shows a compositional bias: basic residues; it reads RHTRHISIRFRRRK. Residues 1912–1931 show a composition bias toward basic and acidic residues; that stretch reads GEGKETTERKRPRHTQEKSK. A helical membrane pass occupies residues 1977 to 1996; that stretch reads YALMFLADIVDIIIIIFGFW. Over 1997 to 2016 the chain is Extracellular; sequence AFGKHSAATDIASSLSDDQV. A helical membrane pass occupies residues 2017 to 2033; it reads PQAFLFMLLVQFGTMVI. Topologically, residues 2034–2047 are cytoplasmic; it reads DRALYLRKTVLGKL. The chain crosses the membrane as a helical span at residues 2048–2068; the sequence is AFQVVLVVAIHIWMFFILPAV. Residues 2069-2076 are Extracellular-facing; that stretch reads TERMFSQN. Residues 2077–2092 traverse the membrane as a helical segment; that stretch reads AVAQLWYFVKCIYFAL. Topologically, residues 2093–2192 are cytoplasmic; that stretch reads SAYQIRCGYP…KKKIVKYGMG (100 aa). The chain crosses the membrane as a helical span at residues 2193 to 2213; the sequence is GLIILFLIAIIWFPLLFMSLI. Over 2214–2457 the chain is Extracellular; that stretch reads RSVVGVVNQP…IFSDKVSPPS (244 aa). Cys-2437 and Cys-2441 are joined by a disulfide. A helical membrane pass occupies residues 2458–2478; sequence LGFLAGYGIVGLYVSIVLVVG. Over 2479–2547 the chain is Cytoplasmic; it reads KFVRGFFSEI…TMIKWTRERE (69 aa).

The protein belongs to the PIEZO (TC 1.A.75) family. As to quaternary structure, homotrimer; the homotrimer forms a propeller-shaped Piezo channel with a cation-ion conducting pore. Heterotrimeric interaction may occur between PIEZO1 and PIEZO2. Interacts with PKD2. Interacts with STOMl3. Interacts with TMC1, TMC2, PCDG15 and CIB2; the interaction may be part of the MET complex. Interacts with MDFIC (via C-terminus); the interaction prolongs Piezo channel inactivation. Interacts with MDFI (via C-terminus); the interaction prolongs Piezo channel inactivation. Expressed in bladder, colon, kidney and skin. Also expressed in bone marrow, liver, lung, spleen and erythrocytes (at protein level). Expressed in myoblasts (at protein level). Expressed in red blood cells. Expressed in cochlear inner and outer hair cells (IHCs and OHCs) and vestibular organ HCs.

Its subcellular location is the endoplasmic reticulum membrane. The protein resides in the endoplasmic reticulum-Golgi intermediate compartment membrane. It localises to the cell membrane. It is found in the cell projection. The protein localises to the lamellipodium membrane. It catalyses the reaction K(+)(in) = K(+)(out). It carries out the reaction Na(+)(in) = Na(+)(out). The catalysed reaction is Ca(2+)(in) = Ca(2+)(out). The enzyme catalyses Mg(2+)(in) = Mg(2+)(out). Regulated by auxillary subunits MDFIC and MDFI. Down-regulated by phosphatidylserines exposed on the cell surface. Divalent ions decrease the single-channel permeability of K(+). Its function is as follows. Pore-forming subunit of the mechanosensitive non-specific cation Piezo channel required for rapidly adapting mechanically activated (MA) currents and has a key role in sensing touch and tactile pain. Piezo channels are homotrimeric three-blade propeller-shaped structures that utilize a cap-motion and plug-and-latch mechanism to gate their ion-conducting pathways. Generates currents characterized by a linear current-voltage relationship that are sensitive to ruthenium red and gadolinium. Conductance to monovalent alkali ions is highest for K(+), intermediate for Na(+) and lowest for Li(+). Divalent ions except for Mn(2+) permeate the channel but more slowly than the monovalent ions and they also reduce K(+) currents. Plays a key role in epithelial cell adhesion by maintaining integrin activation through R-Ras recruitment to the ER, most probably in its activated state, and subsequent stimulation of calpain signaling. In inner ear hair cells, PIEZO1/2 subunits may constitute part of the mechanotransducer (MET) non-selective cation channel complex where they may act as pore-forming ion-conducting component in the complex. In the kidney, may contribute to the detection of intraluminal pressure changes and to urine flow sensing. Acts as a shear-stress sensor that promotes endothelial cell organization and alignment in the direction of blood flow through calpain activation. Plays a key role in blood vessel formation and vascular structure in both development and adult physiology. Acts as a sensor of phosphatidylserine (PS) flipping at the plasma membrane and governs morphogenesis of muscle cells. In myoblasts, flippase-mediated PS enrichment at the inner leaflet of plasma membrane triggers channel activation and Ca(2+) influx followed by Rho GTPases signal transduction, leading to assembly of cortical actomyosin fibers and myotube formation. The sequence is that of Piezo-type mechanosensitive ion channel component 1 from Mus musculus (Mouse).